Here is a 337-residue protein sequence, read N- to C-terminus: Protein ABHD13 (337 aa).

Residues 37–57 traverse the membrane as a helical; Signal-anchor for type II membrane protein segment; it reads FHLYGGIILLLLIFISIAGIL. Catalysis depends on charge relay system residues Ser-193, Asp-268, and His-298. An N-linked (GlcNAc...) asparagine glycan is attached at Asn-299.

This sequence belongs to the serine esterase family.

Its subcellular location is the membrane. The sequence is that of Protein ABHD13 from Homo sapiens (Human).